The following is a 975-amino-acid chain: Protein spalten (975 aa).

Disordered stretches follow at residues 1-31 (MKKM…QLAQ) and 64-99 (NLAQ…SNNN). The segment covering 8-17 (NKKEKKEEQS) has biased composition (basic and acidic residues). Residues 21-70 (SSLAQQHQLAQQQYQLQQQQLQLQYQQHQQQLQLAQQQKQNEQNLAQLST) are a coiled coil. The region spanning 114–458 (FCGTIMILGH…DAEKRGFTTP (345 aa)) is the G-alpha domain. The tract at residues 117-130 (TIMILGHTESGKTT) is G1 motif. GTP-binding positions include 122 to 129 (GHTESGKT), 261 to 267 (ISAYDQK), 286 to 290 (GCSGK), and 373 to 376 (NTSD). A G2 motif region spans residues 259 to 267 (DIISAYDQK). Positions 282-291 (VDLFGCSGKQ) are G3 motif. The segment at 369–376 (YLIFNTSD) is G4 motif. Residues 427–432 (VNLLDK) are G5 motif. Disordered regions lie at residues 455 to 520 (FTTP…GSST) and 541 to 700 (DNDS…VGSK). Low complexity-rich tracts occupy residues 460-478 (NQSN…SRNS), 500-515 (LKNV…NTTT), and 544-587 (SSYS…NNAT). Residues 595-688 (PPKEPKPVKP…DGAAESKKNG (94 aa)) show a composition bias toward basic and acidic residues. Residues 704-972 (ESGFGSLQGR…DNITVLVVIL (269 aa)) form the PPM-type phosphatase domain. 4 residues coordinate Mn(2+): Asp749, Gly750, Asp920, and Asp963.

It in the N-terminal section; belongs to the G-alpha family. In the C-terminal section; belongs to the PP2C family. In terms of assembly, g proteins are composed of 3 units; alpha, beta and gamma. The alpha chain contains the guanine nucleotide binding site. Requires Mg(2+) as cofactor. Mn(2+) is required as a cofactor.

It localises to the cytoplasm. The protein resides in the cytosol. The protein localises to the cell membrane. The enzyme catalyses O-phospho-L-seryl-[protein] + H2O = L-seryl-[protein] + phosphate. It catalyses the reaction O-phospho-L-threonyl-[protein] + H2O = L-threonyl-[protein] + phosphate. Inhibited by 50 mM NaF (sodium fluoride). Functionally, involved in cell-type differentiation and morphogenesis. Dephosphorylates casein; in vitro. May also be involved as modulators or transducers in various transmembrane signaling systems. In Dictyostelium discoideum (Social amoeba), this protein is Protein spalten (spnA).